The sequence spans 195 residues: Ribonuclease HII (195 aa).

The RNase H type-2 domain maps to 8–195 (WGVVGVDEAG…FAPVRRLLGG (188 aa)). The a divalent metal cation site is built by aspartate 14, glutamate 15, and aspartate 106.

It belongs to the RNase HII family. Mn(2+) serves as cofactor. The cofactor is Mg(2+).

The protein resides in the cytoplasm. The enzyme catalyses Endonucleolytic cleavage to 5'-phosphomonoester.. Its function is as follows. Endonuclease that specifically degrades the RNA of RNA-DNA hybrids. This chain is Ribonuclease HII, found in Halorhodospira halophila (strain DSM 244 / SL1) (Ectothiorhodospira halophila (strain DSM 244 / SL1)).